The primary structure comprises 120 residues: Ribosome-binding factor A (120 aa).

Belongs to the RbfA family. As to quaternary structure, monomer. Binds 30S ribosomal subunits, but not 50S ribosomal subunits or 70S ribosomes.

It is found in the cytoplasm. One of several proteins that assist in the late maturation steps of the functional core of the 30S ribosomal subunit. Associates with free 30S ribosomal subunits (but not with 30S subunits that are part of 70S ribosomes or polysomes). Required for efficient processing of 16S rRNA. May interact with the 5'-terminal helix region of 16S rRNA. The protein is Ribosome-binding factor A of Rickettsia conorii (strain ATCC VR-613 / Malish 7).